The chain runs to 243 residues: Dirigent protein 16 (243 aa).

A signal peptide spans 1–24 (MMIKQSPFLLLTTILFTVAVFVAA).

Belongs to the plant dirigent protein family. Homodimer.

The protein localises to the secreted. It is found in the extracellular space. The protein resides in the apoplast. Dirigent proteins impart stereoselectivity on the phenoxy radical-coupling reaction, yielding optically active lignans from two molecules of coniferyl alcohol in the biosynthesis of lignans, flavonolignans, and alkaloids and thus plays a central role in plant secondary metabolism. The sequence is that of Dirigent protein 16 (DIR16) from Arabidopsis thaliana (Mouse-ear cress).